The sequence spans 249 residues: Ribosomal RNA small subunit methyltransferase J (249 aa).

Residues 101–102 (RD), 117–118 (ER), 153–154 (SS), and D171 each bind S-adenosyl-L-methionine.

This sequence belongs to the methyltransferase superfamily. RsmJ family.

The protein resides in the cytoplasm. The enzyme catalyses guanosine(1516) in 16S rRNA + S-adenosyl-L-methionine = N(2)-methylguanosine(1516) in 16S rRNA + S-adenosyl-L-homocysteine + H(+). Specifically methylates the guanosine in position 1516 of 16S rRNA. The sequence is that of Ribosomal RNA small subunit methyltransferase J from Salmonella arizonae (strain ATCC BAA-731 / CDC346-86 / RSK2980).